A 122-amino-acid chain; its full sequence is Large ribosomal subunit protein uL14 (122 aa).

The protein belongs to the universal ribosomal protein uL14 family. As to quaternary structure, part of the 50S ribosomal subunit. Forms a cluster with proteins L3 and L19. In the 70S ribosome, L14 and L19 interact and together make contacts with the 16S rRNA in bridges B5 and B8.

Functionally, binds to 23S rRNA. Forms part of two intersubunit bridges in the 70S ribosome. The protein is Large ribosomal subunit protein uL14 of Renibacterium salmoninarum (strain ATCC 33209 / DSM 20767 / JCM 11484 / NBRC 15589 / NCIMB 2235).